The primary structure comprises 317 residues: MPGEQQAEEEEEEEMQEEMVLLVKGEEDEGEEKYEVVKLKIPMDNKEVPGEAPAPSADPARPHACPDCGRAFARRSTLAKHARTHTGERPFGCTECGRRFSQKSALTKHGRTHTGERPYECPECDKRFSAASNLRQHRRRHTGEKPYACAHCGRRFAQSSNYAQHLRVHTGEKPYACPDCGRAFGGSSCLARHRRTHTGERPYACADCGTRFAQSSALAKHRRVHTGEKPHRCAVCGRRFGHRSNLAEHARTHTGERPYPCAECGRRFRLSSHFIRHRRAHMRRRLYICAGCGRDFKLPPGATAATATERCPECEGS.

A compositionally biased stretch (acidic residues) spans 1-17 (MPGEQQAEEEEEEEMQE). Residues 1–63 (MPGEQQAEEE…APSADPARPH (63 aa)) are disordered. Lys-33 participates in a covalent cross-link: Glycyl lysine isopeptide (Lys-Gly) (interchain with G-Cter in SUMO2). Positions 33 to 49 (KYEVVKLKIPMDNKEVP) are enriched in basic and acidic residues. 8 consecutive C2H2-type zinc fingers follow at residues 63-85 (HACPDCGRAFARRSTLAKHARTH), 91-113 (FGCTECGRRFSQKSALTKHGRTH), 119-141 (YECPECDKRFSAASNLRQHRRRH), 147-169 (YACAHCGRRFAQSSNYAQHLRVH), 175-197 (YACPDCGRAFGGSSCLARHRRTH), 203-225 (YACADCGTRFAQSSALAKHRRVH), 231-253 (HRCAVCGRRFGHRSNLAEHARTH), and 259-281 (YPCAECGRRFRLSSHFIRHRRAH).

The protein belongs to the krueppel C2H2-type zinc-finger protein family.

It localises to the nucleus. May be involved in transcriptional regulation. In Homo sapiens (Human), this protein is Zinc finger protein 771 (ZNF771).